A 909-amino-acid chain; its full sequence is Protein translocase subunit SecA (909 aa).

ATP is bound by residues glutamine 85, 103 to 107 (GEGKT), and aspartate 512. Residues 866 to 899 (HETSATGGEEEINKPVVKGKKIGRNDPCPCGSGK) are disordered. Residues cysteine 893, cysteine 895, cysteine 904, and cysteine 905 each contribute to the Zn(2+) site.

The protein belongs to the SecA family. Monomer and homodimer. Part of the essential Sec protein translocation apparatus which comprises SecA, SecYEG and auxiliary proteins SecDF. Other proteins may also be involved. Requires Zn(2+) as cofactor.

The protein resides in the cell membrane. Its subcellular location is the cytoplasm. It catalyses the reaction ATP + H2O + cellular proteinSide 1 = ADP + phosphate + cellular proteinSide 2.. Part of the Sec protein translocase complex. Interacts with the SecYEG preprotein conducting channel. Has a central role in coupling the hydrolysis of ATP to the transfer of proteins into and across the cell membrane, serving as an ATP-driven molecular motor driving the stepwise translocation of polypeptide chains across the membrane. The sequence is that of Protein translocase subunit SecA from Finegoldia magna (strain ATCC 29328 / DSM 20472 / WAL 2508) (Peptostreptococcus magnus).